We begin with the raw amino-acid sequence, 174 residues long: Ribosome maturation factor RimM (174 aa).

Positions 96–169 constitute a PRC barrel domain; that stretch reads EPDTYYDHQL…ILEIDPPDGL (74 aa).

Belongs to the RimM family. In terms of assembly, binds ribosomal protein uS19.

It localises to the cytoplasm. An accessory protein needed during the final step in the assembly of 30S ribosomal subunit, possibly for assembly of the head region. Essential for efficient processing of 16S rRNA. May be needed both before and after RbfA during the maturation of 16S rRNA. It has affinity for free ribosomal 30S subunits but not for 70S ribosomes. The polypeptide is Ribosome maturation factor RimM (Mycobacterium marinum (strain ATCC BAA-535 / M)).